Here is a 241-residue protein sequence, read N- to C-terminus: DNA repair protein RecO (241 aa).

Belongs to the RecO family.

In terms of biological role, involved in DNA repair and RecF pathway recombination. The polypeptide is DNA repair protein RecO (Dinoroseobacter shibae (strain DSM 16493 / NCIMB 14021 / DFL 12)).